The chain runs to 199 residues: MARCKS-related protein (199 aa).

A disordered region spans residues 1–199; that stretch reads MGSQSSKAPR…PTPAGAEQNE (199 aa). The N-myristoyl glycine moiety is linked to residue Gly2. Residue Thr14 is modified to Phosphothreonine. Positions 16–26 are enriched in low complexity; it reads EEAAGASPAKA. A phosphoserine mark is found at Ser22, Ser36, and Ser48. Positions 53-64 are enriched in low complexity; that stretch reads GTDEAAGATGDA. Ser71 bears the Phosphoserine mark. Positions 76-85 are enriched in basic and acidic residues; it reads AKGDAPPKET. A Phosphothreonine modification is found at Thr85. Residues 86–98 are compositionally biased toward basic residues; the sequence is PKKKKKFSFKKPF. The effector domain involved in lipid-binding and calmodulin-binding stretch occupies residues 87 to 110; it reads KKKKKFSFKKPFKLSGLSFKRNRK. 3 positions are modified to phosphoserine; by PKC: Ser93, Ser101, and Ser104. Ser119 is subject to Phosphoserine. Ser120 carries the post-translational modification Phosphoserine; by MAPK8. A Phosphoserine modification is found at Ser135. Thr148 is modified (phosphothreonine; by MAPK8). Phosphoserine is present on Ser151. A compositionally biased stretch (low complexity) spans 156 to 167; that stretch reads AKGAEAGAACKG. Position 170 is a phosphothreonine (Thr170). The span at 181–199 shows a compositional bias: low complexity; the sequence is STPSGPESGPTPAGAEQNE. At Thr182 the chain carries Phosphothreonine; by MAPK8. Thr191 is modified (phosphothreonine).

It belongs to the MARCKS family. In terms of assembly, binds to filamentous actin (F-actin), but not to monomeric G-actin, independently of its phosphorylation status. Interacts with calmodulin. In terms of processing, phosphorylated. Phosphorylation at Ser-120 and Thr-182 is non-redundantly catalyzed by MAPK8 in vivo. Phosphorylation at Thr-148 is preferentially catalyzed by MAPK8 in vivo, but this modification can also be catalyzed by other kinases in the absence of MAPK8. May be phosphorylated by protein kinase C, which disrupts the interaction with calmodulin.

Its subcellular location is the cytoplasm. It is found in the cytoskeleton. The protein localises to the cell membrane. Its function is as follows. Controls cell movement by regulating actin cytoskeleton homeostasis and filopodium and lamellipodium formation. When unphosphorylated, induces cell migration. When phosphorylated by MAPK8, induces actin bundles formation and stabilization, thereby reducing actin plasticity, hence restricting cell movement, including neuronal migration. May be involved in coupling the protein kinase C and calmodulin signal transduction systems. This chain is MARCKS-related protein (MARCKSL1), found in Oryctolagus cuniculus (Rabbit).